Reading from the N-terminus, the 676-residue chain is RNA helicase NPH-II (676 aa).

The Helicase ATP-binding domain occupies 172–347; the sequence is FLAWISHRPV…IFLPNPAFIH (176 aa). 185 to 192 contacts ATP; that stretch reads GGTGVGKT. The DEXH box motif lies at 296 to 299; sequence DEVH. The 170-residue stretch at 366–535 folds into the Helicase C-terminal domain; the sequence is NPSSRMAYIE…NYILYANKFN (170 aa).

Belongs to the DEAD box helicase family. DEAH subfamily. In terms of assembly, monomer.

It localises to the virion. It catalyses the reaction ATP + H2O = ADP + phosphate + H(+). NTP-dependent helicase that catalyzes unidirectional unwinding of 3'tailed duplex RNAs and plays an important role during transcription of early mRNAs, presumably by preventing R-loop formation behind the elongating RNA polymerase. Might also play a role in the export of newly synthesized mRNA chains out of the core into the cytoplasm. Required for replication and propagation of viral particles. This is RNA helicase NPH-II (OPG084) from Monkeypox virus.